The chain runs to 340 residues: Lipopolysaccharide heptosyltransferase 3 (340 aa).

This sequence belongs to the glycosyltransferase 9 family.

It carries out the reaction an L-alpha-D-Hep-(1-&gt;3)-4-O-phospho-L-alpha-D-Hep-(1-&gt;5)-[alpha-Kdo-(2-&gt;4)]-alpha-Kdo-(2-&gt;6)-lipid A + ADP-L-glycero-beta-D-manno-heptose = an L-alpha-D-Hep-(1-&gt;7)-L-alpha-D-Hep-(1-&gt;3)-4-O-phospho-L-alpha-D-Hep-(1-&gt;5)-[alpha-Kdo-(2-&gt;4)]-alpha-Kdo-(2-&gt;6)-lipid A + ADP + H(+). It catalyses the reaction L-alpha-D-Hep-(1-&gt;3)-4-O-phospho-L-alpha-D-Hep-(1-&gt;5)-[alpha-Kdo-(2-&gt;4)]-alpha-Kdo-(2-&gt;6)-lipid A (E. coli) + ADP-L-glycero-beta-D-manno-heptose = L-alpha-D-Hep-(1-&gt;7)-L-alpha-D-Hep-(1-&gt;3)-4-O-phospho-L-alpha-D-Hep-(1-&gt;5)-[alpha-Kdo-(2-&gt;4)]-alpha-Kdo-(2-&gt;6)-lipid A (E. coli) + ADP + H(+). It participates in bacterial outer membrane biogenesis; LPS core biosynthesis. Functionally, glycosyltransferase involved in the biosynthesis of the core oligosaccharide region of lipopolysaccharide (LPS). Catalyzes the addition of the third heptose unit (HepIII) to the second heptose unit (HepII) of the phospho-Hep2-Kdo2-lipid A module. The transfer of HepIII seems to be a prerequisite to the phosphorylation of the second heptose unit. The chain is Lipopolysaccharide heptosyltransferase 3 from Escherichia coli.